We begin with the raw amino-acid sequence, 224 residues long: Urease accessory protein UreG (224 aa).

A compositionally biased stretch (basic residues) spans 1 to 20; the sequence is MATHSHPHSHTVPARPRRVR. A disordered region spans residues 1–25; that stretch reads MATHSHPHSHTVPARPRRVRKPGEP. Position 32-39 (32-39) interacts with GTP; that stretch reads GPVGSGKT.

It belongs to the SIMIBI class G3E GTPase family. UreG subfamily. In terms of assembly, homodimer. UreD, UreF and UreG form a complex that acts as a GTP-hydrolysis-dependent molecular chaperone, activating the urease apoprotein by helping to assemble the nickel containing metallocenter of UreC. The UreE protein probably delivers the nickel.

It localises to the cytoplasm. Facilitates the functional incorporation of the urease nickel metallocenter. This process requires GTP hydrolysis, probably effectuated by UreG. The sequence is that of Urease accessory protein UreG from Mycobacterium bovis (strain ATCC BAA-935 / AF2122/97).